Reading from the N-terminus, the 110-residue chain is Parvalbumin alpha (110 aa).

EF-hand domains follow at residues 39-74 (KGPDVMKQVFGILDQDRSGFIEEDELCLMLKGFTPN) and 78-110 (LSVKETTALLAAGDKDGDGKIGMDEFVTLVSES). Ca(2+)-binding residues include Asp52, Asp54, Ser56, Phe58, Glu60, Glu63, Asp91, Asp93, Asp95, Lys97, and Glu102.

The protein belongs to the parvalbumin family.

Its function is as follows. In muscle, parvalbumin is thought to be involved in relaxation after contraction. It binds two calcium ions. This Aquarana catesbeiana (American bullfrog) protein is Parvalbumin alpha.